Consider the following 194-residue polypeptide: Imidazoleglycerol-phosphate dehydratase (194 aa).

The protein belongs to the imidazoleglycerol-phosphate dehydratase family.

The protein resides in the cytoplasm. The enzyme catalyses D-erythro-1-(imidazol-4-yl)glycerol 3-phosphate = 3-(imidazol-4-yl)-2-oxopropyl phosphate + H2O. Its pathway is amino-acid biosynthesis; L-histidine biosynthesis; L-histidine from 5-phospho-alpha-D-ribose 1-diphosphate: step 6/9. This Streptococcus mutans serotype c (strain ATCC 700610 / UA159) protein is Imidazoleglycerol-phosphate dehydratase.